The primary structure comprises 218 residues: MKFFIDTANLEQIREANALGVLDGVTTNPSLMAKEGIKGVENQHKHYIEICNIVDGDVSAEVIATNYEGMIKEGEELAALNPHIVVKVPCIEDGIKAIKYFSNKGIRTNCTLVFSAGQALLAAKAGATYVSPFVGRLDDICNDGVGLVAQIVELYQTYDYKTQVLAASIRNTLHILQCAEVGADVVTCPLSAIKGLLNHPLTDIGLEKFLADYKKVNG.

Lys87 acts as the Schiff-base intermediate with substrate in catalysis.

It belongs to the transaldolase family. Type 3B subfamily.

Its subcellular location is the cytoplasm. The enzyme catalyses D-sedoheptulose 7-phosphate + D-glyceraldehyde 3-phosphate = D-erythrose 4-phosphate + beta-D-fructose 6-phosphate. Its pathway is carbohydrate degradation; pentose phosphate pathway; D-glyceraldehyde 3-phosphate and beta-D-fructose 6-phosphate from D-ribose 5-phosphate and D-xylulose 5-phosphate (non-oxidative stage): step 2/3. Transaldolase is important for the balance of metabolites in the pentose-phosphate pathway. This chain is Probable transaldolase, found in Phocaeicola vulgatus (strain ATCC 8482 / DSM 1447 / JCM 5826 / CCUG 4940 / NBRC 14291 / NCTC 11154) (Bacteroides vulgatus).